The chain runs to 614 residues: Zinc metalloproteinase-disintegrin-like Eoc1 (614 aa).

The N-terminal stretch at 1–19 (MQVLLITISLAVLPYLGSS) is a signal peptide. The propeptide occupies 20–193 (IILESGIVND…KASQLNLTPE (174 aa)). Gln-194 carries the pyrrolidone carboxylic acid modification. Residues 202 to 398 (KHIKVAIVAD…KMPQCILIKP (197 aa)) enclose the Peptidase M12B domain. N-linked (GlcNAc...) asparagine glycosylation occurs at Asn-268. 3 disulfide bridges follow: Cys-313-Cys-393, Cys-353-Cys-377, and Cys-355-Cys-360. Zn(2+) is bound at residue His-338. Glu-339 is a catalytic residue. Residues His-342 and His-348 each coordinate Zn(2+). Asn-376 is a glycosylation site (N-linked (GlcNAc...) asparagine). A Disintegrin domain is found at 406–492 (PPVCGNSLVE…ECPADQFQRN (87 aa)). Residues Val-408, Asn-411, Leu-413, Glu-415, Glu-418, and Asp-421 each coordinate Ca(2+). 14 cysteine pairs are disulfide-bonded: Cys-409–Cys-438, Cys-420–Cys-433, Cys-422–Cys-428, Cys-432–Cys-455, Cys-446–Cys-452, Cys-451–Cys-477, Cys-464–Cys-484, Cys-471–Cys-503, Cys-496–Cys-508, Cys-515–Cys-565, Cys-530–Cys-576, Cys-543–Cys-553, Cys-560–Cys-602, and Cys-596–Cys-607. A D/ECD-tripeptide motif is present at residues 470–472 (ECD). N-linked (GlcNAc...) asparagine glycosylation occurs at Asn-498.

It belongs to the venom metalloproteinase (M12B) family. P-III subfamily. P-IIIc sub-subfamily. Heterodimer; disulfide-linked. Requires Zn(2+) as cofactor. As to expression, expressed by the venom gland.

The protein resides in the secreted. This metalloproteinase hydrolyzes azocasein, and oxidized insulin B-chain. Also hydrolyzes the alpha-chain (FGA) and more slowly the beta-chain of fibrinogen (FGB), without affecting the gamma-chain. Does not cleave fibrin. Inhibits endothelial cell adhesion to extracellular matrix proteins such as fibrinogen, fibronectin, vitronectin, collagen I, and collagen IV. Induces apoptosis in vascular endothelial cells. This chain is Zinc metalloproteinase-disintegrin-like Eoc1 (Svmp3-Eoc1), found in Echis ocellatus (Ocellated saw-scaled viper).